We begin with the raw amino-acid sequence, 395 residues long: Nuclear hormone receptor family member nhr-10 (395 aa).

Residues Glu15–Gln90 constitute a DNA-binding region (nuclear receptor). 2 consecutive NR C4-type zinc fingers follow at residues Cys18–Cys38 and Cys54–Cys78. In terms of domain architecture, NR LBD spans Pro152–Ile392.

This sequence belongs to the nuclear hormone receptor family.

The protein resides in the nucleus. In terms of biological role, probable transcription factor that acts in a feed-forward loop with nhr-68 to activate genes involved in the vitamin B12-independent breakdown of the short-chain fatty acid propionate. This pathway is triggered in response to a diet low in vitamin B12, when canonical vitamin B12-dependent propionate breakdown cannot function; the resulting accumulation of propionate is probably sensed by nhr-10 and/or nhr-68. This is Nuclear hormone receptor family member nhr-10 (nhr-10) from Caenorhabditis elegans.